The following is a 346-amino-acid chain: Phosphoribosylformylglycinamidine cyclo-ligase (346 aa).

It belongs to the AIR synthase family.

The protein resides in the cytoplasm. It carries out the reaction 2-formamido-N(1)-(5-O-phospho-beta-D-ribosyl)acetamidine + ATP = 5-amino-1-(5-phospho-beta-D-ribosyl)imidazole + ADP + phosphate + H(+). The protein operates within purine metabolism; IMP biosynthesis via de novo pathway; 5-amino-1-(5-phospho-D-ribosyl)imidazole from N(2)-formyl-N(1)-(5-phospho-D-ribosyl)glycinamide: step 2/2. The sequence is that of Phosphoribosylformylglycinamidine cyclo-ligase from Bacillus cereus (strain B4264).